The following is a 136-amino-acid chain: T-cell receptor alpha chain constant (136 aa).

Positions 19 to 103 (STLCLFTDFD…LTEKSFETDM (85 aa)) constitute an Ig-like C1-type domain. An intrachain disulfide couples Cys-22 to Cys-72. 3 N-linked (GlcNAc...) asparagine glycosylation sites follow: Asn-66, Asn-80, and Asn-109. A connecting peptide region spans residues 90 to 111 (CDATLTEKSFETDMNLNFQNLS). Residues 111–131 (SVMGLRILLLKVAGFNLLMTL) traverse the membrane as a helical segment. The Cytoplasmic segment spans residues 132-136 (RLWSS).

In terms of assembly, alpha-beta TR is a heterodimer composed of an alpha and beta chain; disulfide-linked. The alpha-beta TR is associated with the transmembrane signaling CD3 coreceptor proteins to form the TR-CD3 (TcR or TCR). The assembly of alpha-beta TR heterodimers with CD3 occurs in the endoplasmic reticulum where a single alpha-beta TR heterodimer associates with one CD3D-CD3E heterodimer, one CD3G-CD3E heterodimer and one CD247 homodimer forming a stable octameric structure. CD3D-CD3E and CD3G-CD3E heterodimers preferentially associate with TR alpha and TR beta chains, respectively. The association of the CD247 homodimer is the last step of TcR assembly in the endoplasmic reticulum and is required for transport to the cell surface.

It is found in the cell membrane. Constant region of T cell receptor (TR) alpha chain. Alpha-beta T cell receptors are antigen specific receptors which are essential to the immune response and are present on the cell surface of T lymphocytes. Recognize peptide-major histocompatibility (MH) (pMH) complexes that are displayed by antigen presenting cells (APC), a prerequisite for efficient T cell adaptive immunity against pathogens. Binding of alpha-beta TR to pMH complex initiates TR-CD3 clustering on the cell surface and intracellular activation of LCK that phosphorylates the ITAM motifs of CD3G, CD3D, CD3E and CD247 enabling the recruitment of ZAP70. In turn, ZAP70 phosphorylates LAT, which recruits numerous signaling molecules to form the LAT signalosome. The LAT signalosome propagates signal branching to three major signaling pathways, the calcium, the mitogen-activated protein kinase (MAPK) kinase and the nuclear factor NF-kappa-B (NF-kB) pathways, leading to the mobilization of transcription factors that are critical for gene expression and essential for T cell growth and differentiation. The T cell repertoire is generated in the thymus, by V-(D)-J rearrangement. This repertoire is then shaped by intrathymic selection events to generate a peripheral T cell pool of self-MH restricted, non-autoaggressive T cells. Post-thymic interaction of alpha-beta TR with the pMH complexes shapes TR structural and functional avidity. The chain is T-cell receptor alpha chain constant from Mus musculus (Mouse).